The sequence spans 618 residues: Sodium-coupled monocarboxylate transporter 2 (618 aa).

The Extracellular segment spans residues 1 to 9 (MEVKNFAVW). A helical membrane pass occupies residues 10–30 (DYVVFAALFFISSGIGVFFAI). The Cytoplasmic portion of the chain corresponds to 31 to 47 (KERKKATSREFLVGGRQ). The chain crosses the membrane as a helical span at residues 48–68 (MSFGPVGLSLTASFMSAVTVL). Residues 69–82 (GTPSEVYRFGASFL) are Extracellular-facing. A helical membrane pass occupies residues 83–103 (VFFIAYLFVILLTSELFLPVF). Topologically, residues 104-128 (YRSGITSTYEYLQLRFNKPVRYAAT) are cytoplasmic. The helical transmembrane segment at 129–149 (VIYIVQTILYTGVVVYAPALA) threads the bilayer. Over 150–157 (LNQVTGFD) the chain is Extracellular. The chain crosses the membrane as a helical span at residues 158–178 (LWGSVFATGIVCTFYCTLGGL). The Cytoplasmic portion of the chain corresponds to 179–180 (KA). A helical transmembrane segment spans residues 181 to 201 (VVWTDAFQMVVMIVGFLTVLI). The Extracellular portion of the chain corresponds to 202 to 235 (QGSTHAGGFHNVLEQSTNGSRLHIFDFDVDPLRR). Residues 236-256 (HTFWTITVGGTFTWLGIYGVN) traverse the membrane as a helical segment. At 257-275 (QSTIQRCISCKTEKHAKLA) the chain is on the cytoplasmic side. Residues 276-296 (LYFNLLGLWIILVCAVFSGLI) traverse the membrane as a helical segment. Over 297–321 (MYSHFKDCDPWTSGIISAPDQLMPY) the chain is Extracellular. Residues 322–342 (FVMEIFATMPGLPGLFVACAF) traverse the membrane as a helical segment. Over 343–385 (SGTLSTVASSINALATVTFEDFVKSCFPHLSDKLSTWISKGLC) the chain is Cytoplasmic. Residues 386 to 406 (LLFGVMCTSMAVAASVMGGVV) traverse the membrane as a helical segment. Residues 407-411 (QASLS) lie on the Extracellular side of the membrane. A helical transmembrane segment spans residues 412 to 432 (IHGMCGGPMLGLFSLGIVFPF). The Cytoplasmic portion of the chain corresponds to 433 to 437 (VNWKG). A helical membrane pass occupies residues 438–458 (ALGGLLTGITLSFWVAIGAFI). At 459–504 (YPAPASKTWPLPLSTDQCIKSNVTATGPPVLSSRPGIADTWYSISY) the chain is on the extracellular side. The N-linked (GlcNAc...) asparagine glycan is linked to Asn480. Residues 505 to 525 (LYYSAVGCLGCIVAGVIISLI) traverse the membrane as a helical segment. Topologically, residues 526–618 (TGRQRGEDIQ…NNMAFETTHF (93 aa)) are cytoplasmic.

Belongs to the sodium:solute symporter (SSF) (TC 2.A.21) family.

It is found in the apical cell membrane. The catalysed reaction is (S)-lactate(out) + Na(+)(out) = (S)-lactate(in) + Na(+)(in). It carries out the reaction nicotinate(out) + Na(+)(out) = nicotinate(in) + Na(+)(in). The enzyme catalyses pyruvate(out) + Na(+)(out) = pyruvate(in) + Na(+)(in). It catalyses the reaction propanoate(out) + Na(+)(out) = propanoate(in) + Na(+)(in). The catalysed reaction is butanoate(out) + Na(+)(out) = butanoate(in) + Na(+)(in). It carries out the reaction acetoacetate(out) + Na(+)(out) = acetoacetate(in) + Na(+)(in). Cotransport of monocarboxylates and nicotinate strongly inhibited by ibuprofen, fenoprofen and ketoprofen. Its function is as follows. Acts as an electroneutral and low-affinity sodium (Na(+))-dependent sodium-coupled solute transporter. Catalyzes the transport across the plasma membrane of many monocarboxylates such as lactate, pyruvate, nicotinate, propionate, butyrate and beta-D-hydroxybutyrate. May be responsible for the first step of reabsorption of monocarboxylates from the lumen of the proximal tubule of the kidney and the small intestine. May play also a role in monocarboxylates transport in the retina. The protein is Sodium-coupled monocarboxylate transporter 2 of Homo sapiens (Human).